The chain runs to 270 residues: Elongation factor Tu (270 aa).

The tr-type G domain occupies 1–103; the sequence is GILVVSAADG…AVDDYIPTPE (103 aa). Residue 35–38 participates in GTP binding; it reads NKVD.

It belongs to the TRAFAC class translation factor GTPase superfamily. Classic translation factor GTPase family. EF-Tu/EF-1A subfamily. As to quaternary structure, monomer.

It is found in the cytoplasm. The catalysed reaction is GTP + H2O = GDP + phosphate + H(+). Its function is as follows. GTP hydrolase that promotes the GTP-dependent binding of aminoacyl-tRNA to the A-site of ribosomes during protein biosynthesis. The polypeptide is Elongation factor Tu (tuf) (Staphylococcus warneri).